Here is a 310-residue protein sequence, read N- to C-terminus: UDP-N-acetylenolpyruvoylglucosamine reductase (310 aa).

Positions 35 to 203 constitute an FAD-binding PCMH-type domain; it reads RAGGAAEALV…TRVRFALRKG (169 aa). Residue R183 is part of the active site. Catalysis depends on S232, which acts as the Proton donor. Residue E302 is part of the active site.

Belongs to the MurB family. FAD is required as a cofactor.

The protein localises to the cytoplasm. It catalyses the reaction UDP-N-acetyl-alpha-D-muramate + NADP(+) = UDP-N-acetyl-3-O-(1-carboxyvinyl)-alpha-D-glucosamine + NADPH + H(+). It participates in cell wall biogenesis; peptidoglycan biosynthesis. Functionally, cell wall formation. This is UDP-N-acetylenolpyruvoylglucosamine reductase from Myxococcus xanthus (strain DK1622).